Consider the following 336-residue polypeptide: tRNA (guanine(10)-N2)-dimethyltransferase (336 aa).

In terms of domain architecture, THUMP spans 50–147 (KILKKRLAYA…NDRFILTRRL (98 aa)).

The protein belongs to the methyltransferase superfamily. Trm-G10 family. In terms of assembly, monomer.

The protein resides in the cytoplasm. It catalyses the reaction guanosine(10) in tRNA + 2 S-adenosyl-L-methionine = N(2)-dimethylguanosine(10) in tRNA + 2 S-adenosyl-L-homocysteine + 2 H(+). In terms of biological role, catalyzes the adenosylmethionine-dependent methylation of the exocyclic amino group (N(2)) of guanosine at position 10 of various tRNAs. Acts via a two-step process that leads to the formation of either N(2)-monomethyl (m(2)G) or N(2)-dimethylguanosine (m(2)(2)G). The sequence is that of tRNA (guanine(10)-N2)-dimethyltransferase (trmG10) from Methanothermobacter thermautotrophicus (strain ATCC 29096 / DSM 1053 / JCM 10044 / NBRC 100330 / Delta H) (Methanobacterium thermoautotrophicum).